A 322-amino-acid chain; its full sequence is MTQVYDITIIGGGPVGLFAAFYAHLRQAKVKIIDSLPQLGGQPAILYPEKAILDIPAFPSLTGQELTDNLLAQLAPFDTTICLNETLTAIEPGETITLTTNKGNHQTKTLIIAMGGGAFKPRPLEIDGADSFDNVHYHVSNIQQYADKDIVVLGGGDSAVDWSLAFEKIAKTTQIIHRRDNFRALEHSVEELKQSSVTIHTPFIPKGLSGENGRASAIDFDKVKSEDKLTLSFDHLFVNYGFKSSVGTLKEWGLELNRHRIVVNSKQETSVPGIYAIGDCCFYEGKIDLIATGLGEAPTAVNNAMNYLNPNEKVQPKHSTSL.

L87, F119, D279, and T320 together coordinate FAD.

The protein belongs to the ferredoxin--NADP reductase type 2 family. As to quaternary structure, homodimer. FAD serves as cofactor.

The enzyme catalyses 2 reduced [2Fe-2S]-[ferredoxin] + NADP(+) + H(+) = 2 oxidized [2Fe-2S]-[ferredoxin] + NADPH. This is Ferredoxin--NADP reductase from Streptococcus suis (strain 98HAH33).